A 439-amino-acid chain; its full sequence is NAD-dependent malic enzyme 1 (439 aa).

Residues 9-84 form the ACT domain; that stretch reads TLMIETPSVP…GIRLHTVSDE (76 aa). Catalysis depends on tyrosine 112, which acts as the Proton donor. The Proton acceptor role is filled by lysine 167. A divalent metal cation contacts are provided by glutamate 209, aspartate 210, and aspartate 235. NAD(+) contacts are provided by residues 268 to 271, asparagine 347, and asparagine 373; that span reads LGAA.

It belongs to the malic enzymes family. Mg(2+) serves as cofactor. The cofactor is Mn(2+).

The enzyme catalyses (S)-malate + NAD(+) = pyruvate + CO2 + NADH. It carries out the reaction oxaloacetate + H(+) = pyruvate + CO2. Functionally, catalyzes the decarboxylation of malate to pyruvate. Is specific for NAD, cannot use NADP. Can also catalyze the decarboxylation of oxaloacetate. Involved in keeping the ATP levels high. This Bacillus subtilis (strain 168) protein is NAD-dependent malic enzyme 1.